Consider the following 630-residue polypeptide: Elongation factor 4 (630 aa).

Residues 1–22 (MTVARNRAGAGPGKGSPISSFA) are disordered. The region spanning 30-211 (ARIRNFCIIA…EVVRQVPAPV (182 aa)) is the tr-type G domain. Residues 42–47 (DHGKST) and 158–161 (NKID) each bind GTP.

This sequence belongs to the TRAFAC class translation factor GTPase superfamily. Classic translation factor GTPase family. LepA subfamily.

Its subcellular location is the cell membrane. The catalysed reaction is GTP + H2O = GDP + phosphate + H(+). Required for accurate and efficient protein synthesis under certain stress conditions. May act as a fidelity factor of the translation reaction, by catalyzing a one-codon backward translocation of tRNAs on improperly translocated ribosomes. Back-translocation proceeds from a post-translocation (POST) complex to a pre-translocation (PRE) complex, thus giving elongation factor G a second chance to translocate the tRNAs correctly. Binds to ribosomes in a GTP-dependent manner. This is Elongation factor 4 from Rhodococcus jostii (strain RHA1).